A 442-amino-acid chain; its full sequence is D-galactonate dehydratase family member SSBG_02010 (442 aa).

A Mg(2+)-binding site is contributed by aspartate 246. Position 248 (histidine 248) interacts with D-arabinonate. Mg(2+)-binding residues include glutamate 272 and glutamate 298. Glutamate 298, arginine 319, histidine 348, and glutamate 375 together coordinate D-arabinonate.

This sequence belongs to the mandelate racemase/muconate lactonizing enzyme family. GalD subfamily.

In terms of biological role, has no detectable activity with D-mannonate and with a panel of 70 other acid sugars (in vitro), in spite of the conservation of the residues that are expected to be important for catalytic activity and cofactor binding. May have evolved a divergent function. The polypeptide is D-galactonate dehydratase family member SSBG_02010 (Streptomyces sp. (strain SPB074)).